An 894-amino-acid polypeptide reads, in one-letter code: MRHGSQNSEHPDSFGARDVIEVAGESFEIFRLLNAVPSAGSLPYSLRILLENLLRHEDGVHVHAGLVDALAAWDPRGPAPEILFHPARVVMQDYSGVPCLVDLAAMREAFVRLGGAAETLSPQVPVDLVVDHSVMADVFGTPDAYARNAALDHARNRERYELLRWAEATFDRLRIVPPNTGIIHQVNLERLAGVVIADDTGSLPALYPDTVVGTDSHTPMVNGLGVLGWGVGGIEAVAAVLGRPLTLRVPKVIGCELTGRPADGVTATDIVLTLTERLRAHGVVGAYIEFNGPGLAALSAADRATIANMCPEYGATAALFPVDDEVLRYLRATGRPERHLDLVRAYAETQGLWYDPAAAATIRYTERVRFDLASVVPSIAGPRRPQDRVPLATTRTAFAEAVSEVNGGTARRAEVTAPDGSRHTLGDGAVVLAAITSCTNTSNPALMIAAGLLARKAVELGLQPRPWVKSTLAPGSAAVMEYLARAGLDTYLDKLGFSLVAYGCTSCIGNSGPLPESVAGAVRESGLASVAVLSGNRNFEGRINPDVRMNYLASPPLVVAYALAGTMDIDLTTEPLGTGSDGRPVTLADIWPDSREIDEVARTAVDPGTYTQMYDSLMAGDERWRALPAHPQQLFPWAEDSTYIAPPPYFVGTTARPRPLDDIRGARVLADLGDSVTTDHISPAGGIPAHSAAGVFLRELGVPPGDFNSYGARRCNHEVLLRGLFSNPRLRNRLAAGKTGGHTVNHLTGELTTMYEAAVAYQEAGVPLVVLAGREYGTGSSRDWAAKGPALIGVRAVIAESFERIHRSNLVGMGILPLEFPAGQNARTLGLTGAEEFDISGVREFSESVPRTVRVTAGAVSFDAVVRVDTAMEAEFIRHGGIMPFTLRGLLESA.

[4Fe-4S] cluster contacts are provided by Cys-438, Cys-504, and Cys-507.

The protein belongs to the aconitase/IPM isomerase family. [4Fe-4S] cluster is required as a cofactor.

The catalysed reaction is phosphinomethylmalate = phosphinomethylisomalate. It carries out the reaction phosphinomethylmalate = 2-(phosphinatomethylidene)butanedioate + H2O. It catalyses the reaction 2-(phosphinatomethylidene)butanedioate + H2O = phosphinomethylisomalate. It functions in the pathway secondary metabolite biosynthesis; bialaphos biosynthesis. Isomerase involved in the biosynthesis of phosphinothricin tripeptide (PTT), also known as bialaphos (BA), a natural-product antibiotic and potent herbicide. Probably catalyzes the isomerization of phosphinomethylmalate to phosphinomethylisomalate. Shows no standard aconitase activity with citrate as a substrate and is not able to complement an acnA mutant. The sequence is that of Phosphinomethylmalate isomerase from Streptomyces viridochromogenes (strain DSM 40736 / JCM 4977 / BCRC 1201 / Tue 494).